A 208-amino-acid polypeptide reads, in one-letter code: uncharacterized protein (208 aa).

This is an uncharacterized protein from Synechococcus elongatus (strain ATCC 33912 / PCC 7942 / FACHB-805) (Anacystis nidulans R2).